The primary structure comprises 342 residues: RNA 3'-terminal phosphate cyclase (342 aa).

Residues Q100 and 283–287 each bind ATP; that span reads FLGDQ. The active-site Tele-AMP-histidine intermediate is the H307.

This sequence belongs to the RNA 3'-terminal cyclase family. Type 1 subfamily.

The protein localises to the cytoplasm. The catalysed reaction is a 3'-end 3'-phospho-ribonucleotide-RNA + ATP = a 3'-end 2',3'-cyclophospho-ribonucleotide-RNA + AMP + diphosphate. Catalyzes the conversion of 3'-phosphate to a 2',3'-cyclic phosphodiester at the end of RNA. The mechanism of action of the enzyme occurs in 3 steps: (A) adenylation of the enzyme by ATP; (B) transfer of adenylate to an RNA-N3'P to produce RNA-N3'PP5'A; (C) and attack of the adjacent 2'-hydroxyl on the 3'-phosphorus in the diester linkage to produce the cyclic end product. The biological role of this enzyme is unknown but it is likely to function in some aspects of cellular RNA processing. The sequence is that of RNA 3'-terminal phosphate cyclase (rtcA) from Pyrococcus abyssi (strain GE5 / Orsay).